The chain runs to 438 residues: MSQANAATKASSDVFFNASLEDIDPEIFGAIRNELGRQRHEIGLIASENIVSRAVLEAQGSILTNKYAEGYPGKRYYGGGQYVDVVEELAIERAKKLFGAEFANVQPNSGSQMNQAVFLALLQPGDTFMGLDLNSGGHLTHGSPVNMSGKWFNVVSYGVRKDDHLLDMDEVARLARENKPKLILAGGTAYSRIWDWKRFREIADEVGAYLMVDMAHIAGLVAGGQHPSPVPHAHVCTTTTHKSLRGPRGGMILTNDADIAKKINSAVFPGLQGGPLMHVIAGKAVAFAEALKPEFKLYAKNVVDNARALAEELKSHGLDIVSGGTDNHLMLVDLRPKNATGKRAEAALGRANITCNKNGIPFDPEKPFVTSGVRLGTPAGTTRGFGVAEFKEIGSLIAEVLDGLKVANSDEGNAAVEQAVKEKVIALTGRFPMYGYQG.

(6S)-5,6,7,8-tetrahydrofolate-binding positions include Leu133 and 137-139; that span reads GHL. Lys242 bears the N6-(pyridoxal phosphate)lysine mark.

This sequence belongs to the SHMT family. As to quaternary structure, homodimer. Pyridoxal 5'-phosphate serves as cofactor.

The protein resides in the cytoplasm. The enzyme catalyses (6R)-5,10-methylene-5,6,7,8-tetrahydrofolate + glycine + H2O = (6S)-5,6,7,8-tetrahydrofolate + L-serine. Its pathway is one-carbon metabolism; tetrahydrofolate interconversion. It participates in amino-acid biosynthesis; glycine biosynthesis; glycine from L-serine: step 1/1. Functionally, catalyzes the reversible interconversion of serine and glycine with tetrahydrofolate (THF) serving as the one-carbon carrier. This reaction serves as the major source of one-carbon groups required for the biosynthesis of purines, thymidylate, methionine, and other important biomolecules. Also exhibits THF-independent aldolase activity toward beta-hydroxyamino acids, producing glycine and aldehydes, via a retro-aldol mechanism. The protein is Serine hydroxymethyltransferase of Brucella suis (strain ATCC 23445 / NCTC 10510).